The following is a 699-amino-acid chain: Zinc finger protein 782 (699 aa).

One can recognise a KRAB domain in the interval 8 to 79 (VSFQDVTVEF…EKEKGFLSRN (72 aa)). The disordered stretch occupies residues 75-95 (FLSRNSPEDSQPDEISEKSPE). Residues 279-307 (CFCRITHKTLTGGKSFSQKSHIREHHRVH) form a C2H2-type 1; degenerate zinc finger. The segment at 316-332 (GKSFNRNSTLPVHQRTH) adopts a C2H2-type 2; degenerate zinc-finger fold. The C2H2-type 3; degenerate zinc finger occupies 337–360 (YSDYHPCTETFSYQSTFSVHQKVH). The segment at 366 to 388 (YEYNECGKSCSMNSHLIWPQKSH) adopts a C2H2-type 4; degenerate zinc-finger fold. 11 consecutive C2H2-type zinc fingers follow at residues 394-416 (YECP…QRTH), 422-444 (YKCD…QRTH), 450-472 (FECH…QRTH), 478-500 (FECN…RRTH), 506-528 (YKCD…HRTH), 534-556 (YKCN…HRIH), 562-584 (YKCN…HRTH), 590-612 (YQCE…QRTH), 618-640 (YECN…QRTH), 646-668 (YNCN…QRTH), and 674-696 (YKCD…QKAH).

This sequence belongs to the krueppel C2H2-type zinc-finger protein family.

Its subcellular location is the nucleus. Its function is as follows. May be involved in transcriptional regulation. This chain is Zinc finger protein 782 (ZNF782), found in Homo sapiens (Human).